Reading from the N-terminus, the 335-residue chain is Tyrosine-protein phosphatase 1 (335 aa).

Residues 15–328 (LLGKFKFIQN…LFIYHAAKYL (314 aa)) form the Tyrosine-protein phosphatase domain. A Phosphoserine; by CLK1 modification is found at serine 83. The active-site Phosphocysteine intermediate is cysteine 252.

This sequence belongs to the protein-tyrosine phosphatase family. Non-receptor class subfamily. Activated by phosphorylation at Ser-83.

Its subcellular location is the cytoplasm. The catalysed reaction is O-phospho-L-tyrosyl-[protein] + H2O = L-tyrosyl-[protein] + phosphate. Its function is as follows. Is not required for vegetative growth. The sequence is that of Tyrosine-protein phosphatase 1 (PTP1) from Saccharomyces cerevisiae (strain ATCC 204508 / S288c) (Baker's yeast).